The chain runs to 594 residues: Elongation factor 4 (594 aa).

The region spanning 2 to 184 (KNIRNFSIIA…TIVAKVPAPE (183 aa)) is the tr-type G domain. GTP contacts are provided by residues 14–19 (DHGKST) and 131–134 (NKID).

The protein belongs to the TRAFAC class translation factor GTPase superfamily. Classic translation factor GTPase family. LepA subfamily.

The protein resides in the cell inner membrane. It carries out the reaction GTP + H2O = GDP + phosphate + H(+). Required for accurate and efficient protein synthesis under certain stress conditions. May act as a fidelity factor of the translation reaction, by catalyzing a one-codon backward translocation of tRNAs on improperly translocated ribosomes. Back-translocation proceeds from a post-translocation (POST) complex to a pre-translocation (PRE) complex, thus giving elongation factor G a second chance to translocate the tRNAs correctly. Binds to ribosomes in a GTP-dependent manner. The protein is Elongation factor 4 of Francisella tularensis subsp. novicida (strain U112).